Reading from the N-terminus, the 589-residue chain is Putative ABC transporter ATP-binding protein MG015 (589 aa).

6 helical membrane passes run 9–29 (LLYV…NPIL), 66–86 (LTIV…FNVA), 161–181 (LIFL…ATLI), 251–271 (IFLF…SISI), 280–300 (IPSF…IASL), and 303–323 (ITLA…GVVS). The 311-residue stretch at 9 to 319 (LLYVFLCIVL…IFTLWNLVQL (311 aa)) folds into the ABC transmembrane type-1 domain. The ABC transporter domain maps to 352-586 (IRFENVAFGY…NGFYARLKQS (235 aa)). 385 to 392 (GPTGAGKS) is an ATP binding site.

This sequence belongs to the ABC transporter superfamily.

It is found in the cell membrane. The protein is Putative ABC transporter ATP-binding protein MG015 of Mycoplasma genitalium (strain ATCC 33530 / DSM 19775 / NCTC 10195 / G37) (Mycoplasmoides genitalium).